The following is a 174-amino-acid chain: Ribosome maturation factor RimP (174 aa).

The protein belongs to the RimP family.

The protein localises to the cytoplasm. Required for maturation of 30S ribosomal subunits. In Acinetobacter baumannii (strain AB307-0294), this protein is Ribosome maturation factor RimP.